Reading from the N-terminus, the 98-residue chain is Integration host factor subunit alpha (98 aa).

The tract at residues 49–71 (FGNFDLRDKNQRPGRNPKTGEDI) is disordered.

It belongs to the bacterial histone-like protein family. Heterodimer of an alpha and a beta chain.

This protein is one of the two subunits of integration host factor, a specific DNA-binding protein that functions in genetic recombination as well as in transcriptional and translational control. The polypeptide is Integration host factor subunit alpha (Shewanella oneidensis (strain ATCC 700550 / JCM 31522 / CIP 106686 / LMG 19005 / NCIMB 14063 / MR-1)).